The primary structure comprises 426 residues: 5-aminovalerate aminotransferase DavT (426 aa).

Pyridoxal 5'-phosphate contacts are provided by residues 112–113, Tyr139, and 240–243; these read GS and DEVQ. N6-(pyridoxal phosphate)lysine is present on Lys269. Thr298 is a pyridoxal 5'-phosphate binding site.

Belongs to the class-III pyridoxal-phosphate-dependent aminotransferase family. Pyridoxal 5'-phosphate is required as a cofactor.

The catalysed reaction is 5-aminopentanoate + 2-oxoglutarate = 5-oxopentanoate + L-glutamate. Its function is as follows. Catalyzes the conversion of 5-aminovalerate to 5-oxopentanoate. This Pseudomonas aeruginosa (strain ATCC 15692 / DSM 22644 / CIP 104116 / JCM 14847 / LMG 12228 / 1C / PRS 101 / PAO1) protein is 5-aminovalerate aminotransferase DavT (davT).